The sequence spans 565 residues: NAD-dependent malic enzyme (565 aa).

Y104 acts as the Proton donor in catalysis. NAD(+) is bound at residue R157. Catalysis depends on K175, which acts as the Proton acceptor. The a divalent metal cation site is built by E246, D247, and D270. NAD(+) contacts are provided by D270 and N418.

This sequence belongs to the malic enzymes family. In terms of assembly, homotetramer. Requires Mg(2+) as cofactor. Mn(2+) is required as a cofactor.

The enzyme catalyses (S)-malate + NAD(+) = pyruvate + CO2 + NADH. It catalyses the reaction oxaloacetate + H(+) = pyruvate + CO2. The chain is NAD-dependent malic enzyme from Escherichia coli O6:H1 (strain CFT073 / ATCC 700928 / UPEC).